A 430-amino-acid polypeptide reads, in one-letter code: Phosphoribosylamine--glycine ligase (430 aa).

Residues 109–314 (RGLMNKYGID…FLTIAEHIIN (206 aa)) enclose the ATP-grasp domain. Residue 136–192 (IREYPGDLAVKPTGLTGGKGVKVMGEQVDREGAVEYAMTLKDQVIILEERLLGEEFT) coordinates ATP. Mg(2+) contacts are provided by Gln272, Glu284, and Asn286. Mn(2+) contacts are provided by Gln272, Glu284, and Asn286.

This sequence belongs to the GARS family. The cofactor is Mg(2+). Mn(2+) serves as cofactor.

The catalysed reaction is 5-phospho-beta-D-ribosylamine + glycine + ATP = N(1)-(5-phospho-beta-D-ribosyl)glycinamide + ADP + phosphate + H(+). It functions in the pathway purine metabolism; IMP biosynthesis via de novo pathway; N(1)-(5-phospho-D-ribosyl)glycinamide from 5-phospho-alpha-D-ribose 1-diphosphate: step 2/2. This Methanocorpusculum labreanum (strain ATCC 43576 / DSM 4855 / Z) protein is Phosphoribosylamine--glycine ligase.